Here is a 134-residue protein sequence, read N- to C-terminus: RxLR effector protein 4 (134 aa).

The N-terminal stretch at 1-22 (MRSLFYIAVAVAVFARSSAVAA) is a signal peptide. The tract at residues 43-65 (AMASSDSRKRFLRATDPEDGDLQ) is disordered. A compositionally biased stretch (basic and acidic residues) spans 48–58 (DSRKRFLRATD). Positions 52 to 71 (RFLRATDPEDGDLQADDEER) match the RxLR-dEER motif.

The protein belongs to the RxLR effector family.

The protein resides in the secreted. Its function is as follows. Effector that enhances plant susceptibility to P.parasitica in Nicotiana benthamiana and Arabidopsis thaliana. Triggers non-specific cell death in a variety of plants, including tobacco, tomato, potato and A.thaliana. E4-induced cell death is dependent on HSP90, NPK and SGT1, suggesting that PpE4 is recognized by the plant immune system. The chain is RxLR effector protein 4 from Phytophthora nicotianae (strain INRA-310) (Phytophthora parasitica).